The following is a 91-amino-acid chain: Cell division topological specificity factor (91 aa).

The protein belongs to the MinE family.

Functionally, prevents the cell division inhibition by proteins MinC and MinD at internal division sites while permitting inhibition at polar sites. This ensures cell division at the proper site by restricting the formation of a division septum at the midpoint of the long axis of the cell. This is Cell division topological specificity factor from Desulfitobacterium hafniense (strain DSM 10664 / DCB-2).